The following is a 504-amino-acid chain: Glutamate--tRNA ligase (504 aa).

A 'HIGH' region motif is present at residues 25–35 (PSPTGNPHVGL). 4 residues coordinate Zn(2+): Cys122, Cys124, Cys149, and Glu151. Positions 270-274 (KLSKR) match the 'KMSKS' region motif. An ATP-binding site is contributed by Lys273.

The protein belongs to the class-I aminoacyl-tRNA synthetase family. Glutamate--tRNA ligase type 1 subfamily. In terms of assembly, monomer. Zn(2+) is required as a cofactor.

It is found in the cytoplasm. The catalysed reaction is tRNA(Glu) + L-glutamate + ATP = L-glutamyl-tRNA(Glu) + AMP + diphosphate. Functionally, catalyzes the attachment of glutamate to tRNA(Glu) in a two-step reaction: glutamate is first activated by ATP to form Glu-AMP and then transferred to the acceptor end of tRNA(Glu). The polypeptide is Glutamate--tRNA ligase (Streptomyces avermitilis (strain ATCC 31267 / DSM 46492 / JCM 5070 / NBRC 14893 / NCIMB 12804 / NRRL 8165 / MA-4680)).